Reading from the N-terminus, the 159-residue chain is Large ribosomal subunit protein uL11 (159 aa).

The span at 137-149 (EGKDPREVQREVD) shows a compositional bias: basic and acidic residues. Residues 137 to 159 (EGKDPREVQREVDSGAWDKLLGG) are disordered.

The protein belongs to the universal ribosomal protein uL11 family. In terms of assembly, part of the ribosomal stalk of the 50S ribosomal subunit. Interacts with L10 and the large rRNA to form the base of the stalk. L10 forms an elongated spine to which L12 dimers bind in a sequential fashion forming a multimeric L10(L12)X complex.

Its function is as follows. Forms part of the ribosomal stalk which helps the ribosome interact with GTP-bound translation factors. The polypeptide is Large ribosomal subunit protein uL11 (Korarchaeum cryptofilum (strain OPF8)).